A 236-amino-acid chain; its full sequence is Small ribosomal subunit protein eS6 (236 aa).

It belongs to the eukaryotic ribosomal protein eS6 family. As to quaternary structure, component of the small ribosomal subunit. Mature ribosomes consist of a small (40S) and a large (60S) subunit. The 40S subunit contains about 32 different proteins and 1 molecule of RNA (18S). The 60S subunit contains 45 different proteins and 3 molecules of RNA (25S, 5.8S and 5S).

It localises to the cytoplasm. Functionally, component of the ribosome, a large ribonucleoprotein complex responsible for the synthesis of proteins in the cell. The small ribosomal subunit (SSU) binds messenger RNAs (mRNAs) and translates the encoded message by selecting cognate aminoacyl-transfer RNA (tRNA) molecules. The large subunit (LSU) contains the ribosomal catalytic site termed the peptidyl transferase center (PTC), which catalyzes the formation of peptide bonds, thereby polymerizing the amino acids delivered by tRNAs into a polypeptide chain. The nascent polypeptides leave the ribosome through a tunnel in the LSU and interact with protein factors that function in enzymatic processing, targeting, and the membrane insertion of nascent chains at the exit of the ribosomal tunnel. RPS6A is involved in nucleolar processing of pre-18S ribosomal RNA and ribosome assembly. The polypeptide is Small ribosomal subunit protein eS6 (RPS6A) (Candida albicans (strain SC5314 / ATCC MYA-2876) (Yeast)).